The sequence spans 430 residues: Enolase (430 aa).

Position 163 (glutamine 163) interacts with (2R)-2-phosphoglycerate. Glutamate 205 (proton donor) is an active-site residue. Mg(2+)-binding residues include aspartate 242, glutamate 285, and aspartate 312. Residues lysine 337, arginine 366, serine 367, and lysine 388 each contribute to the (2R)-2-phosphoglycerate site. Lysine 337 functions as the Proton acceptor in the catalytic mechanism.

This sequence belongs to the enolase family. It depends on Mg(2+) as a cofactor.

The protein localises to the cytoplasm. It is found in the secreted. Its subcellular location is the cell surface. The catalysed reaction is (2R)-2-phosphoglycerate = phosphoenolpyruvate + H2O. It functions in the pathway carbohydrate degradation; glycolysis; pyruvate from D-glyceraldehyde 3-phosphate: step 4/5. Catalyzes the reversible conversion of 2-phosphoglycerate (2-PG) into phosphoenolpyruvate (PEP). It is essential for the degradation of carbohydrates via glycolysis. The sequence is that of Enolase from Rubrobacter xylanophilus (strain DSM 9941 / JCM 11954 / NBRC 16129 / PRD-1).